The chain runs to 161 residues: 2-C-methyl-D-erythritol 2,4-cyclodiphosphate synthase (161 aa).

Residues aspartate 10 and histidine 12 each contribute to the a divalent metal cation site. 4-CDP-2-C-methyl-D-erythritol 2-phosphate is bound by residues 10–12 (DVH) and 36–37 (HS). An a divalent metal cation-binding site is contributed by histidine 44. 4-CDP-2-C-methyl-D-erythritol 2-phosphate contacts are provided by residues 58–60 (DIG), 63–67 (FPDTD), 102–108 (AQAPKMA), 134–137 (TTTE), phenylalanine 141, and arginine 144.

It belongs to the IspF family. As to quaternary structure, homotrimer. Requires a divalent metal cation as cofactor.

The enzyme catalyses 4-CDP-2-C-methyl-D-erythritol 2-phosphate = 2-C-methyl-D-erythritol 2,4-cyclic diphosphate + CMP. Its pathway is isoprenoid biosynthesis; isopentenyl diphosphate biosynthesis via DXP pathway; isopentenyl diphosphate from 1-deoxy-D-xylulose 5-phosphate: step 4/6. Functionally, involved in the biosynthesis of isopentenyl diphosphate (IPP) and dimethylallyl diphosphate (DMAPP), two major building blocks of isoprenoid compounds. Catalyzes the conversion of 4-diphosphocytidyl-2-C-methyl-D-erythritol 2-phosphate (CDP-ME2P) to 2-C-methyl-D-erythritol 2,4-cyclodiphosphate (ME-CPP) with a corresponding release of cytidine 5-monophosphate (CMP). This is 2-C-methyl-D-erythritol 2,4-cyclodiphosphate synthase from Shewanella baltica (strain OS155 / ATCC BAA-1091).